The primary structure comprises 436 residues: POU domain, class 2, transcription factor 3 (436 aa).

3 disordered regions span residues 1 to 40 (MVNL…NGLD), 140 to 186 (QTGP…DEPS), and 256 to 278 (AESS…SEVF). A POU-specific domain is found at 183-257 (DEPSDLEELE…LLEKWLNDAE (75 aa)). Residues 258–275 (SSPSDPSVSTPSSYPSLS) show a composition bias toward low complexity. A DNA-binding region (homeobox) is located at residues 281 to 340 (KRKKRTSIETNIRLTLEKRFQDNPKPSSEEISMIAEQLSMEKEVVRVWFCNRRQKEKRIN). Positions 363–421 (LGPLSVPPVHSTMPGTVTSSCSPGNNSRPSSPGSGLHASSPTASQNNSKAAVNSASSFN) are disordered. Composition is skewed to low complexity over residues 381 to 397 (SSCS…PGSG) and 405 to 421 (ASQN…SSFN).

The protein belongs to the POU transcription factor family. Class-2 subfamily. As to quaternary structure, interacts (via the POU domain) with POU2AF1 and POU2AF2 in a DNA-dependent manner; this interaction recruits POU2AF2 to chromatin and increases POU2F3 transactivation activity. In terms of tissue distribution, specifically expressed in epidermis and cultured keratinocytes.

The protein localises to the nucleus. In terms of biological role, transcription factor that binds to the octamer motif (5'-ATTTGCAT-3') and regulates cell type-specific differentiation pathways. Involved in the regulation of keratinocytes differentiation. The POU2F3-POU2AF2/POU2AF3 complex drives the expression of tuft-cell-specific genes, a rare chemosensory cells that coordinate immune and neural functions within mucosal epithelial tissues. This Homo sapiens (Human) protein is POU domain, class 2, transcription factor 3.